A 361-amino-acid chain; its full sequence is RuBisCO accumulation factor 1 (361 aa).

Residues 16-197 (NELAQELLRK…RKQIEQLLVD (182 aa)) are N-terminal alpha-helix. The tract at residues 221–347 (PRIVPVVGQL…VIILVRPRRI (127 aa)) is C-terminal beta-sheet.

It belongs to the RAF family. As to quaternary structure, homodimer. Forms an RbcL(8)-Raf1(8) complex. Each Raf1 dimer clamps the exterior of an RbcL dimer, protecting it. The extreme C-terminus (residues 354-361) inserts into the catalytic pocket of RbcL where the Glu-361 forms a salt bridge with 'Lys-202'. This insertion probably contributes to the assembly of RbcL(8). Forms complexes of many stoichiometries with RbcL with and without RbcS. RbcX and Raf1 can bind simultaneously to RbcL.

It localises to the cytoplasm. Functionally, a major RuBisCO chaperone. Acts after GroEL-GroES chaperonin to fold and/or assemble the large subunit of RuBisCO (ccbL, rbcL). Cooperates with RbcX in RbcL folding, plays the major role in assembly of dimers into RbcL(8)-Raf1(8) intermediate complexes. RbcS replaces Raf1, leading to holoenzyme formation. Its function is as follows. In vitro acts as an antagonist to CcmM35, suggesting it might regulate RuBisCO condensation and decondensation. The protein is RuBisCO accumulation factor 1 of Nostoc sp. (strain PCC 7120 / SAG 25.82 / UTEX 2576).